We begin with the raw amino-acid sequence, 510 residues long: NADH-quinone oxidoreductase subunit N (510 aa).

14 helical membrane passes run 14-34 (LLPE…DLFA), 42-62 (VIGW…IINM), 84-104 (AFKL…LSYL), 113-133 (GEYY…ASSA), 135-155 (LITL…LVGL), 170-190 (VVSG…VYGL), 208-228 (MAGY…GLAF), 247-267 (PTPV…ALIF), 286-306 (FFFE…MIIG), 323-343 (SGIA…SLFF), 346-366 (VIFY…VIMV), 390-410 (AIAM…VGFF), 426-446 (WLAA…FGII), and 466-486 (IWTF…FPGL).

It belongs to the complex I subunit 2 family. In terms of assembly, NDH-1 is composed of 14 different subunits. Subunits NuoA, H, J, K, L, M, N constitute the membrane sector of the complex.

Its subcellular location is the cell membrane. It carries out the reaction a quinone + NADH + 5 H(+)(in) = a quinol + NAD(+) + 4 H(+)(out). Functionally, NDH-1 shuttles electrons from NADH, via FMN and iron-sulfur (Fe-S) centers, to quinones in the respiratory chain. The immediate electron acceptor for the enzyme in this species is believed to be a menaquinone. Couples the redox reaction to proton translocation (for every two electrons transferred, four hydrogen ions are translocated across the cytoplasmic membrane), and thus conserves the redox energy in a proton gradient. This chain is NADH-quinone oxidoreductase subunit N, found in Brevibacillus brevis (strain 47 / JCM 6285 / NBRC 100599).